Here is a 184-residue protein sequence, read N- to C-terminus: Ribosome-recycling factor (184 aa).

This sequence belongs to the RRF family.

Its subcellular location is the cytoplasm. In terms of biological role, responsible for the release of ribosomes from messenger RNA at the termination of protein biosynthesis. May increase the efficiency of translation by recycling ribosomes from one round of translation to another. The polypeptide is Ribosome-recycling factor (Borrelia hermsii (strain HS1 / DAH)).